We begin with the raw amino-acid sequence, 357 residues long: MNHELRSVIDAINPVDQSLMAAAQAHLDNLTKPRGSLGRLEELAARLYCIAGGRRPLRVDPARVFTVAGDHGVSAEGVSPFPQEVTRQMVLNFANGGAGINVLCRTAGVDLRVVDAGCLGGPFPEHPALIQRKVAEGTASIARGPAMSLETCEKALLLGISLAEEAAADGCRCVGTGDMGISNTTPSTALYCAYLGLDPADITGPGAGLASEAVRHKVEVIRRALEVNRHIVEAGDPVATLAALGGIEIATLAGLVIGAARHGLACVIDGFISTAAFTAAWKICPDVRGYCFLSHASAEPGYRSVVDALNAQPLLHLGLRLGEGTGGALAMFLMRAAADIFNDMATFADAGVSEADD.

Catalysis depends on Glu323, which acts as the Proton acceptor.

This sequence belongs to the CobT family.

The catalysed reaction is 5,6-dimethylbenzimidazole + nicotinate beta-D-ribonucleotide = alpha-ribazole 5'-phosphate + nicotinate + H(+). Its pathway is nucleoside biosynthesis; alpha-ribazole biosynthesis; alpha-ribazole from 5,6-dimethylbenzimidazole: step 1/2. Functionally, catalyzes the synthesis of alpha-ribazole-5'-phosphate from nicotinate mononucleotide (NAMN) and 5,6-dimethylbenzimidazole (DMB). The polypeptide is Nicotinate-nucleotide--dimethylbenzimidazole phosphoribosyltransferase (Nitratidesulfovibrio vulgaris (strain DP4) (Desulfovibrio vulgaris)).